The primary structure comprises 590 residues: Urease subunit alpha (590 aa).

Residues Gly-134–Phe-590 enclose the Urease domain. The Ni(2+) site is built by His-139, His-141, and Lys-222. Lys-222 bears the N6-carboxylysine mark. His-224 contributes to the substrate binding site. His-251 and His-277 together coordinate Ni(2+). Catalysis depends on His-325, which acts as the Proton donor. Residue Asp-365 participates in Ni(2+) binding. The disordered stretch occupies residues Gln-388–Thr-416. Residues Leu-393–Gly-411 show a composition bias toward low complexity.

This sequence belongs to the metallo-dependent hydrolases superfamily. Urease alpha subunit family. Heterotrimer of UreA (gamma), UreB (beta) and UreC (alpha) subunits. Three heterotrimers associate to form the active enzyme. Requires Ni cation as cofactor. Post-translationally, carboxylation allows a single lysine to coordinate two nickel ions.

Its subcellular location is the cytoplasm. The enzyme catalyses urea + 2 H2O + H(+) = hydrogencarbonate + 2 NH4(+). The protein operates within nitrogen metabolism; urea degradation; CO(2) and NH(3) from urea (urease route): step 1/1. The protein is Urease subunit alpha of Verminephrobacter eiseniae (strain EF01-2).